A 200-amino-acid chain; its full sequence is GTP-binding protein ypt2 (200 aa).

16–23 contributes to the GTP binding site; it reads GDSGVGKS. Positions 38-46 match the Effector region motif; sequence FITTIGIDF. GTP is bound by residues 64–68 and 122–125; these read DTAGQ and NKCD. 2 S-geranylgeranyl cysteine lipidation sites follow: Cys199 and Cys200.

The protein belongs to the small GTPase superfamily. Rab family.

The protein resides in the cell membrane. Its function is as follows. Protein transport. Probably involved in vesicular traffic. This is GTP-binding protein ypt2 (ypt2) from Schizosaccharomyces pombe (strain 972 / ATCC 24843) (Fission yeast).